The chain runs to 226 residues: MNTWLLSLQNSNSPTYDMMIFFHDFTMMILIFITLLILFIMFTMINNNLINRFLLQGHFIELIWTITPMIILILIAIPSFKILYLTDEMFNNKITIKSVGHQWYWSYEYSDFLNIEFDSFMIPSNQLNPNEFRLLDTDNRCILPFNYPIRILTTSMDVIHSWTVPSLGIKMDSTPGRLNQSLLYMYRPGLYFGQCSEICGTNHSFMPIVIESTNFSYFKNWLKSFL.

Over M1 to F25 the chain is Mitochondrial intermembrane. A helical transmembrane segment spans residues T26–N47. The Mitochondrial matrix portion of the chain corresponds to N48–E61. A helical membrane pass occupies residues L62–K81. The Mitochondrial intermembrane segment spans residues I82 to L226. Positions 160, 195, 197, 199, 203, and 206 each coordinate Cu cation. Position 197 (E197) interacts with Mg(2+).

Belongs to the cytochrome c oxidase subunit 2 family. Component of the cytochrome c oxidase (complex IV, CIV), a multisubunit enzyme composed of a catalytic core of 3 subunits and several supernumerary subunits. The complex exists as a monomer or a dimer and forms supercomplexes (SCs) in the inner mitochondrial membrane with ubiquinol-cytochrome c oxidoreductase (cytochrome b-c1 complex, complex III, CIII). It depends on Cu cation as a cofactor.

Its subcellular location is the mitochondrion inner membrane. It catalyses the reaction 4 Fe(II)-[cytochrome c] + O2 + 8 H(+)(in) = 4 Fe(III)-[cytochrome c] + 2 H2O + 4 H(+)(out). Functionally, component of the cytochrome c oxidase, the last enzyme in the mitochondrial electron transport chain which drives oxidative phosphorylation. The respiratory chain contains 3 multisubunit complexes succinate dehydrogenase (complex II, CII), ubiquinol-cytochrome c oxidoreductase (cytochrome b-c1 complex, complex III, CIII) and cytochrome c oxidase (complex IV, CIV), that cooperate to transfer electrons derived from NADH and succinate to molecular oxygen, creating an electrochemical gradient over the inner membrane that drives transmembrane transport and the ATP synthase. Cytochrome c oxidase is the component of the respiratory chain that catalyzes the reduction of oxygen to water. Electrons originating from reduced cytochrome c in the intermembrane space (IMS) are transferred via the dinuclear copper A center (CU(A)) of subunit 2 and heme A of subunit 1 to the active site in subunit 1, a binuclear center (BNC) formed by heme A3 and copper B (CU(B)). The BNC reduces molecular oxygen to 2 water molecules using 4 electrons from cytochrome c in the IMS and 4 protons from the mitochondrial matrix. This is Cytochrome c oxidase subunit 2 (COII) from Lasius sp.